Reading from the N-terminus, the 431-residue chain is Adenylosuccinate synthetase (431 aa).

GTP is bound by residues 12 to 18 (GDEGKGK) and 40 to 42 (GHT). The active-site Proton acceptor is the aspartate 13. Positions 13 and 40 each coordinate Mg(2+). Residues 13–16 (DEGK), 38–41 (NAGH), threonine 128, arginine 142, glutamine 223, threonine 238, and arginine 301 contribute to the IMP site. The active-site Proton donor is the histidine 41. 297-303 (TVTGRPR) serves as a coordination point for substrate. Residues arginine 303, 329-331 (SID), and 411-413 (SVG) each bind GTP.

It belongs to the adenylosuccinate synthetase family. In terms of assembly, homodimer. Mg(2+) serves as cofactor.

The protein resides in the cytoplasm. The catalysed reaction is IMP + L-aspartate + GTP = N(6)-(1,2-dicarboxyethyl)-AMP + GDP + phosphate + 2 H(+). It functions in the pathway purine metabolism; AMP biosynthesis via de novo pathway; AMP from IMP: step 1/2. In terms of biological role, plays an important role in the de novo pathway of purine nucleotide biosynthesis. Catalyzes the first committed step in the biosynthesis of AMP from IMP. The sequence is that of Adenylosuccinate synthetase from Lacticaseibacillus casei (strain BL23) (Lactobacillus casei).